The primary structure comprises 90 residues: UPF0729 protein Bm1_03610 (90 aa).

The protein belongs to the UPF0729 family.

The chain is UPF0729 protein Bm1_03610 from Brugia malayi (Filarial nematode worm).